A 239-amino-acid chain; its full sequence is Ribosomal RNA small subunit methyltransferase G (239 aa).

S-adenosyl-L-methionine-binding positions include Gly79, Phe84, 130–131, and Arg149; that span reads AE.

This sequence belongs to the methyltransferase superfamily. RNA methyltransferase RsmG family.

It is found in the cytoplasm. Its function is as follows. Specifically methylates the N7 position of a guanine in 16S rRNA. This Lactobacillus johnsonii (strain CNCM I-12250 / La1 / NCC 533) protein is Ribosomal RNA small subunit methyltransferase G.